We begin with the raw amino-acid sequence, 1708 residues long: Rapamycin-insensitive companion of mTOR (1708 aa).

Residues 1–789 are interaction with NBN; the sequence is MAAIGRGRSL…DKANLHALIQ (789 aa). Phosphoserine is present on residues serine 21, serine 35, and serine 265. Lysine 274 participates in a covalent cross-link: Glycyl lysine isopeptide (Lys-Gly) (interchain with G-Cter in ubiquitin). The tract at residues 521–570 is ribosome-binding domain; the sequence is LKDTEEALLINLRDSQVLQHKENLEWNWNLIGTILKWPNVNLRNYKDEQL. Positions 543, 572, and 576 each coordinate ATP. The disordered stretch occupies residues 1022 to 1041; that stretch reads LSLNSESTSSRHNSESESVP. Residues lysine 1092 and lysine 1095 each carry the N6-acetyllysine modification. Threonine 1103 carries the post-translational modification Phosphothreonine. The disordered stretch occupies residues 1103–1134; that stretch reads TLPNKKHRSSSDPKGGKLSSESKTSNRRIRTL. N6-acetyllysine occurs at positions 1116, 1119, and 1125. At threonine 1135 the chain carries Phosphothreonine; by RPS6KB1. Residues serine 1138, serine 1162, and serine 1219 each carry the phosphoserine modification. The interval 1204–1252 is disordered; it reads VVESSTSSHMKIRSQSFNTDTTTSGISSMSSSPSRETVGVDATTMDTDC. Over residues 1206-1221 the composition is skewed to polar residues; sequence ESSTSSHMKIRSQSFN. Residues 1222–1240 show a composition bias toward low complexity; that stretch reads TDTTTSGISSMSSSPSRET. Position 1235 is a phosphoserine; by GSK3-beta (serine 1235). Phosphothreonine is present on threonine 1271. Residues serine 1274, serine 1278, serine 1282, and serine 1284 each carry the phosphoserine modification. The segment covering 1275–1288 has biased composition (low complexity); it reads NHLSLSKSNSVSLV. Residues 1275–1298 are disordered; the sequence is NHLSLSKSNSVSLVPPGSSHTLPR. Threonine 1295 is modified (phosphothreonine). A phosphoserine mark is found at serine 1302 and serine 1313. Threonine 1332 bears the Phosphothreonine mark. Serine 1346 and serine 1353 each carry phosphoserine. Threonine 1376 is modified (phosphothreonine). Residue serine 1385 is modified to Phosphoserine. Tyrosine 1386 is modified (phosphotyrosine). Residues serine 1388, serine 1396, and serine 1411 each carry the phosphoserine modification. Residues histidine 1515, cysteine 1520, and cysteine 1523 each contribute to the Zn(2+) site. Serine 1571, serine 1574, serine 1577, and serine 1591 each carry phosphoserine. Cysteine 1651 contacts Zn(2+). Position 1695 is a phosphothreonine; by GSK3-alpha and GSK3-beta (threonine 1695).

Belongs to the RICTOR family. In terms of assembly, component of the mechanistic target of rapamycin complex 2 (mTORC2), consisting in two heterotretramers composed of MTOR, MLST8, RICTOR and MAPKAP1/SIN1. The mTORC2 core complex associates with PRR5/PROTOR1 and/or PRR5L/PROTOR2. Contrary to mTORC1, mTORC2 does not bind to and is not sensitive to FKBP12-rapamycin. Binds directly to MTOR and PRR5 within the TORC2 complex; interaction with MTOR is enhanced by deubiquitination of RICTOR by USP9X. Interaction with MAPKAP1 is not enhanced by RICTOR deubiquitination by USP9X. Interacts with CCDC28B. Interacts with NBN. Interacts with SIK3. Interacts with NCKAP1L. Interacts with kinases GSK3A and GSK3B; the interactions lead to phosphorylation of RICTOR at Thr-1695 which facilitates its FBXW7-mediated ubiquitination and subsequent degradation. Interacts with FBXW7; the interaction is enhanced by GSK3-mediated phosphorylation of Thr-1695 and results in RICTOR ubiquitination and degradation. Interacts with ARMH4 (via cytoplasmic tail); this interaction bridges ARMH4 to the mTORC2 complex and inhibits the mTORC2 kinase activity. Interacts with UBXN2A. Interacts with TSPAN8. (Microbial infection) Interacts with vaccinia virus protein F17; this interaction dysregulates MTOR. In terms of processing, phosphorylated by MTOR; when part of mTORC2. Phosphorylated at Thr-1135 by RPS6KB1 downstream of the mTORC1 complex: phosphorylation of RICTOR inhibits mTORC2 signaling by creating a binding site for 14-3-3 proteins. Phosphorylated at Thr-1695 by GSK3A and GSK3B which facilitates RICTOR ubiquitination and subsequent degradation. Phosphorylated at Ser-1235 by GSK3B in response to endoplasmic stress, inhibiting mTORC2 signaling. Post-translationally, ubiquitinated by the SCF(FBXW7) complex, leading to its degradation by the proteasome. Deubiquitinated by USP9X; deubiquitination stabilizes RICTOR and enhances its binding to MTOR, thus promoting mTORC2 complex assembly. Acetylated by EP300/p300 in response to glucose, leading to activate the mTORC2 complex. Acetylation by BLOC1S1/GCN5L1 in response to hypotoxic stress protects RICTOR against ubiquitination and subsequent degradation by the proteasome.

The protein localises to the cell membrane. The protein resides in the endoplasmic reticulum membrane. It is found in the lysosome membrane. Component of the mechanistic target of rapamycin complex 2 (mTORC2), which transduces signals from growth factors to pathways involved in proliferation, cytoskeletal organization, lipogenesis and anabolic output. In response to growth factors, mTORC2 phosphorylates and activates AGC protein kinase family members, including AKT (AKT1, AKT2 and AKT3), PKC (PRKCA, PRKCB and PRKCE) and SGK1. In contrast to mTORC1, mTORC2 is nutrient-insensitive. Within the mTORC2 complex, RICTOR probably acts as a molecular adapter. RICTOR is responsible for the FKBP12-rapamycin-insensitivity of mTORC2. mTORC2 plays a critical role in AKT1 activation by mediating phosphorylation of different sites depending on the context, such as 'Thr-450', 'Ser-473', 'Ser-477' or 'Thr-479', facilitating the phosphorylation of the activation loop of AKT1 on 'Thr-308' by PDPK1/PDK1 which is a prerequisite for full activation. mTORC2 catalyzes the phosphorylation of SGK1 at 'Ser-422' and of PRKCA on 'Ser-657'. The mTORC2 complex also phosphorylates various proteins involved in insulin signaling, such as FBXW8 and IGF2BP1. mTORC2 acts upstream of Rho GTPases to regulate the actin cytoskeleton, probably by activating one or more Rho-type guanine nucleotide exchange factors. mTORC2 promotes the serum-induced formation of stress-fibers or F-actin. In Homo sapiens (Human), this protein is Rapamycin-insensitive companion of mTOR.